The sequence spans 432 residues: Transcriptional adapter 3-A (432 aa).

Disordered stretches follow at residues 90-127 (HELG…RNMQ) and 275-314 (SPVE…TKSL). Positions 293 to 305 (DGASTSPRSQNKP) are enriched in polar residues. A coiled-coil region spans residues 335–398 (ADDSEDEVLA…NEVMDAFRKI (64 aa)).

The protein belongs to the NGG1 family.

The protein localises to the nucleus. Its function is as follows. Functions as a component of the PCAF complex. The PCAF complex is capable of efficiently acetylating histones in a nucleosomal context. The sequence is that of Transcriptional adapter 3-A (tada3-a) from Xenopus laevis (African clawed frog).